A 118-amino-acid polypeptide reads, in one-letter code: Basic phospholipase A2 CM-II (118 aa).

Cystine bridges form between C11–C70, C26–C117, C28–C44, C43–C98, C50–C91, C59–C84, and C77–C89. Residues Y27, G29, and G31 each coordinate Ca(2+). The active site involves H47. A Ca(2+)-binding site is contributed by D48. D92 is a catalytic residue.

Belongs to the phospholipase A2 family. Group I subfamily. D49 sub-subfamily. The cofactor is Ca(2+). In terms of tissue distribution, expressed by the venom gland.

Its subcellular location is the secreted. It catalyses the reaction a 1,2-diacyl-sn-glycero-3-phosphocholine + H2O = a 1-acyl-sn-glycero-3-phosphocholine + a fatty acid + H(+). Its function is as follows. Snake venom phospholipase A2 (PLA2) that causes myonecrosis when injected intramuscularly, causes neuromuscular blockade with a gradual contracture and a decreased sensitivity to ACh and KCl (in the chick biventer cervicis nerve-muscle preparation), abolishes twitches evoked by indirect stimulation earlier than those by direct stimulation (in the mouse phrenic nerve-diaphragm preparation), shows indirect hemolytic activity, and shows weak anticoagulant activity. PLA2 catalyzes the calcium-dependent hydrolysis of the 2-acyl groups in 3-sn-phosphoglycerides. The sequence is that of Basic phospholipase A2 CM-II from Naja mossambica (Mozambique spitting cobra).